The chain runs to 206 residues: Peptidyl-tRNA hydrolase (206 aa).

Residue Tyr19 coordinates tRNA. Residue His24 is the Proton acceptor of the active site. 3 residues coordinate tRNA: Tyr70, Asn72, and Asn118.

Belongs to the PTH family. In terms of assembly, monomer.

It is found in the cytoplasm. The enzyme catalyses an N-acyl-L-alpha-aminoacyl-tRNA + H2O = an N-acyl-L-amino acid + a tRNA + H(+). Functionally, hydrolyzes ribosome-free peptidyl-tRNAs (with 1 or more amino acids incorporated), which drop off the ribosome during protein synthesis, or as a result of ribosome stalling. In terms of biological role, catalyzes the release of premature peptidyl moieties from peptidyl-tRNA molecules trapped in stalled 50S ribosomal subunits, and thus maintains levels of free tRNAs and 50S ribosomes. The sequence is that of Peptidyl-tRNA hydrolase from Prochlorococcus marinus (strain MIT 9313).